The sequence spans 331 residues: Ketol-acid reductoisomerase (NADP(+)) (331 aa).

The KARI N-terminal Rossmann domain occupies 2–182; the sequence is AKVYYDEDAN…GGTKGGVLET (181 aa). NADP(+)-binding positions include 25 to 28, Ser-51, Ser-53, and 83 to 86; these read YGSQ and DEKQ. His-108 is an active-site residue. Gly-134 is an NADP(+) binding site. One can recognise a KARI C-terminal knotted domain in the interval 183 to 328; sequence TFKDETETDL…VELRAMMPWL (146 aa). Positions 191, 195, 227, and 231 each coordinate Mg(2+). Position 252 (Ser-252) interacts with substrate.

It belongs to the ketol-acid reductoisomerase family. Mg(2+) is required as a cofactor.

The enzyme catalyses (2R)-2,3-dihydroxy-3-methylbutanoate + NADP(+) = (2S)-2-acetolactate + NADPH + H(+). It carries out the reaction (2R,3R)-2,3-dihydroxy-3-methylpentanoate + NADP(+) = (S)-2-ethyl-2-hydroxy-3-oxobutanoate + NADPH + H(+). The protein operates within amino-acid biosynthesis; L-isoleucine biosynthesis; L-isoleucine from 2-oxobutanoate: step 2/4. Its pathway is amino-acid biosynthesis; L-valine biosynthesis; L-valine from pyruvate: step 2/4. In terms of biological role, involved in the biosynthesis of branched-chain amino acids (BCAA). Catalyzes an alkyl-migration followed by a ketol-acid reduction of (S)-2-acetolactate (S2AL) to yield (R)-2,3-dihydroxy-isovalerate. In the isomerase reaction, S2AL is rearranged via a Mg-dependent methyl migration to produce 3-hydroxy-3-methyl-2-ketobutyrate (HMKB). In the reductase reaction, this 2-ketoacid undergoes a metal-dependent reduction by NADPH to yield (R)-2,3-dihydroxy-isovalerate. The polypeptide is Ketol-acid reductoisomerase (NADP(+)) (Clostridium novyi (strain NT)).